A 76-amino-acid chain; its full sequence is Omega-agatoxin-Aa3a (76 aa).

6 disulfide bridges follow: Cys2–Cys19, Cys9–Cys25, Cys16–Cys52, Cys18–Cys40, Cys27–Cys38, and Cys59–Cys67.

It belongs to the neurotoxin 04 (omega-agtx) family. 03 (type II/III omega-agtx) subfamily. Expressed by the venom gland.

Its subcellular location is the secreted. Functionally, omega-agatoxin are antagonist of voltage-gated calcium channels. They block insect neuromuscular transmission presynaptically. Potent blocker of N- (Cav2.2/CACNA1B) and L-type (Cav1/CACNA1) calcium channels. The protein is Omega-agatoxin-Aa3a of Agelenopsis aperta (North American funnel-web spider).